Consider the following 356-residue polypeptide: S-adenosylmethionine:tRNA ribosyltransferase-isomerase (356 aa).

The protein belongs to the QueA family. In terms of assembly, monomer.

It is found in the cytoplasm. The enzyme catalyses 7-aminomethyl-7-carbaguanosine(34) in tRNA + S-adenosyl-L-methionine = epoxyqueuosine(34) in tRNA + adenine + L-methionine + 2 H(+). It participates in tRNA modification; tRNA-queuosine biosynthesis. Transfers and isomerizes the ribose moiety from AdoMet to the 7-aminomethyl group of 7-deazaguanine (preQ1-tRNA) to give epoxyqueuosine (oQ-tRNA). This Salmonella arizonae (strain ATCC BAA-731 / CDC346-86 / RSK2980) protein is S-adenosylmethionine:tRNA ribosyltransferase-isomerase.